The primary structure comprises 276 residues: SF-assemblin (276 aa).

The interval 1-31 is nonhelical region; the sequence is MSLRPFETPGGLSSLSPRRRDFSPTRPGTNG. The interval 1–37 is disordered; that stretch reads MSLRPFETPGGLSSLSPRRRDFSPTRPGTNGPSAKLE. Residues 32–276 form a rod region; that stretch reads PSAKLEHVTE…LQEGLKLVSA (245 aa). A coiled-coil region spans residues 67–145; that stretch reads LLQESLQRIE…LVRDERESRR (79 aa).

This sequence belongs to the SF-assemblin family.

Its subcellular location is the cytoplasm. The protein localises to the cytoskeleton. Major component of the striated microtubule-associated fibers (SMAFs; system-I-fibers). The protein is SF-assemblin of Chlamydomonas reinhardtii (Chlamydomonas smithii).